Reading from the N-terminus, the 254-residue chain is MYKLEVQDLHKRYGSHEVLKGVSLAAKAGDVISIIGSSGSGKSTFLRCINLLEQPHAGKILLNGEELKLVPGRDGALKAADSRQLQRMRSRLSMVFQHFNLWSHMSALENVIEAPVHVLGVSKKEAIEKAEHYLAKVGVAHRKDAYPAHMSGGEQQRVAIARALAVEPEVMLFDEPTSALDPELVGEVLKVMQDLAQEGRTMVVVTHEMGFAREVSNQLVFLHKGLVEEHGCPKEVLANPQSDRLKQFLSGSLK.

The region spanning 4–249 (LEVQDLHKRY…PQSDRLKQFL (246 aa)) is the ABC transporter domain. 36–43 (GSSGSGKS) is an ATP binding site.

This sequence belongs to the ABC transporter superfamily.

It is found in the cell inner membrane. In terms of biological role, part of the arginine-inducible binding-protein-dependent transport system for arginine and ornithine. Probably responsible for energy coupling to the transport system. The chain is Arginine/ornithine transport ATP-binding protein AotP (aotP) from Pseudomonas aeruginosa (strain ATCC 15692 / DSM 22644 / CIP 104116 / JCM 14847 / LMG 12228 / 1C / PRS 101 / PAO1).